The chain runs to 183 residues: Adenine phosphoribosyltransferase (183 aa).

This sequence belongs to the purine/pyrimidine phosphoribosyltransferase family. As to quaternary structure, homodimer.

The protein localises to the cytoplasm. It carries out the reaction AMP + diphosphate = 5-phospho-alpha-D-ribose 1-diphosphate + adenine. It participates in purine metabolism; AMP biosynthesis via salvage pathway; AMP from adenine: step 1/1. Functionally, catalyzes a salvage reaction resulting in the formation of AMP, that is energically less costly than de novo synthesis. The polypeptide is Adenine phosphoribosyltransferase (Shigella flexneri serotype 5b (strain 8401)).